A 420-amino-acid polypeptide reads, in one-letter code: Threonine aspartase 1 (420 aa).

Residues 1–25 (MIMEKGMNSGEGLPSRSSQASAAKV) form a disordered region. Residue Thr-234 is the Nucleophile of the active site.

It belongs to the Ntn-hydrolase family. Intramolecular proteolysis generates 2 subunits, alpha and beta, which reassemble through a non-covalent association to form the fully active enzyme.

Functionally, protease responsible for KMT2A/MLL1 and KMT2D/MLL2 processing and activation. Through substrate activation, it controls the expression of HOXA genes, and the expression of key cell cycle regulators including CCNA1, CCNB1, CCNE1 and CDKN2A. The sequence is that of Threonine aspartase 1 (Tasp1) from Mus musculus (Mouse).